The chain runs to 122 residues: Large ribosomal subunit protein uL14c (122 aa).

This sequence belongs to the universal ribosomal protein uL14 family. As to quaternary structure, part of the 50S ribosomal subunit.

It localises to the plastid. The protein resides in the chloroplast. Its function is as follows. Binds to 23S rRNA. In Chaetosphaeridium globosum (Charophycean green alga), this protein is Large ribosomal subunit protein uL14c.